A 274-amino-acid polypeptide reads, in one-letter code: NH(3)-dependent NAD(+) synthetase (274 aa).

46-53 (GISGGQDS) contributes to the ATP binding site. A Mg(2+)-binding site is contributed by D52. R140 contributes to the deamido-NAD(+) binding site. ATP is bound at residue T160. E165 is a binding site for Mg(2+). The deamido-NAD(+) site is built by K173 and D180. Residues K189 and T211 each coordinate ATP. 260-261 (HK) contributes to the deamido-NAD(+) binding site.

The protein belongs to the NAD synthetase family. In terms of assembly, homodimer.

It carries out the reaction deamido-NAD(+) + NH4(+) + ATP = AMP + diphosphate + NAD(+) + H(+). It participates in cofactor biosynthesis; NAD(+) biosynthesis; NAD(+) from deamido-NAD(+) (ammonia route): step 1/1. Its function is as follows. Catalyzes the ATP-dependent amidation of deamido-NAD to form NAD. Uses ammonia as a nitrogen source. The protein is NH(3)-dependent NAD(+) synthetase of Streptococcus pneumoniae (strain 70585).